A 265-amino-acid polypeptide reads, in one-letter code: 4-hydroxy-tetrahydrodipicolinate reductase (265 aa).

NAD(+) contacts are provided by residues 7–12 (GASGRM) and aspartate 33. Arginine 34 is a binding site for NADP(+). NAD(+)-binding positions include 96–98 (GTT) and 120–123 (AANM). The active-site Proton donor/acceptor is histidine 153. Histidine 154 contacts (S)-2,3,4,5-tetrahydrodipicolinate. The Proton donor role is filled by lysine 157. 163 to 164 (GT) is a binding site for (S)-2,3,4,5-tetrahydrodipicolinate.

It belongs to the DapB family.

Its subcellular location is the cytoplasm. The enzyme catalyses (S)-2,3,4,5-tetrahydrodipicolinate + NAD(+) + H2O = (2S,4S)-4-hydroxy-2,3,4,5-tetrahydrodipicolinate + NADH + H(+). It carries out the reaction (S)-2,3,4,5-tetrahydrodipicolinate + NADP(+) + H2O = (2S,4S)-4-hydroxy-2,3,4,5-tetrahydrodipicolinate + NADPH + H(+). It participates in amino-acid biosynthesis; L-lysine biosynthesis via DAP pathway; (S)-tetrahydrodipicolinate from L-aspartate: step 4/4. Its function is as follows. Catalyzes the conversion of 4-hydroxy-tetrahydrodipicolinate (HTPA) to tetrahydrodipicolinate. The chain is 4-hydroxy-tetrahydrodipicolinate reductase from Burkholderia cenocepacia (strain ATCC BAA-245 / DSM 16553 / LMG 16656 / NCTC 13227 / J2315 / CF5610) (Burkholderia cepacia (strain J2315)).